A 161-amino-acid polypeptide reads, in one-letter code: UPF0763 protein Cla_1130 (161 aa).

The protein belongs to the UPF0763 family.

The polypeptide is UPF0763 protein Cla_1130 (Campylobacter lari (strain RM2100 / D67 / ATCC BAA-1060)).